The sequence spans 138 residues: Large ribosomal subunit protein uL16 (138 aa).

The segment covering 1–13 (MLQPKRRKYRKEQ) has biased composition (basic residues). Residues 1–24 (MLQPKRRKYRKEQKGRNTGKATRG) form a disordered region.

It belongs to the universal ribosomal protein uL16 family. As to quaternary structure, part of the 50S ribosomal subunit.

Its function is as follows. Binds 23S rRNA and is also seen to make contacts with the A and possibly P site tRNAs. The chain is Large ribosomal subunit protein uL16 from Burkholderia lata (strain ATCC 17760 / DSM 23089 / LMG 22485 / NCIMB 9086 / R18194 / 383).